Reading from the N-terminus, the 135-residue chain is Histone H1, macronuclear (135 aa).

The segment covering 1-17 has biased composition (low complexity); sequence MPAKTATAVKRTTTTKK. Positions 1-135 are disordered; it reads MPAKTATAVK…GGKKKSAKKN (135 aa). Basic residues-rich tracts occupy residues 18 to 54 and 62 to 79; these read SAAK…RRTP and KATK…RSAT. Residues 80 to 112 are compositionally biased toward low complexity; it reads KKTTAAPAAAAAPATDAPAAAATPSKATGSAKK. A compositionally biased stretch (basic residues) spans 113-135; the sequence is ASARKSSAKKPAKGGKKKSAKKN.

It is found in the nucleus. It localises to the chromosome. Histones H1 are necessary for the condensation of nucleosome chains into higher-order structures. The protein is Histone H1, macronuclear of Euplotes eurystomus (Ciliate).